Reading from the N-terminus, the 446-residue chain is Tubulin beta-1 chain (446 aa).

Residues Gln11, Glu69, Ser138, Gly142, Thr143, Gly144, Asn204, and Asn226 each coordinate GTP. Glu69 contacts Mg(2+). The disordered stretch occupies residues 422-446 (YQQYQDATADEEGEYEDEEEGDLQD). Positions 429-446 (TADEEGEYEDEEEGDLQD) are enriched in acidic residues.

This sequence belongs to the tubulin family. In terms of assembly, dimer of alpha and beta chains. A typical microtubule is a hollow water-filled tube with an outer diameter of 25 nm and an inner diameter of 15 nM. Alpha-beta heterodimers associate head-to-tail to form protofilaments running lengthwise along the microtubule wall with the beta-tubulin subunit facing the microtubule plus end conferring a structural polarity. Microtubules usually have 13 protofilaments but different protofilament numbers can be found in some organisms and specialized cells. The cofactor is Mg(2+). In terms of tissue distribution, found in areas of rapidly dividing tissues.

The protein resides in the cytoplasm. The protein localises to the cytoskeleton. Its function is as follows. Tubulin is the major constituent of microtubules, a cylinder consisting of laterally associated linear protofilaments composed of alpha- and beta-tubulin heterodimers. Microtubules grow by the addition of GTP-tubulin dimers to the microtubule end, where a stabilizing cap forms. Below the cap, tubulin dimers are in GDP-bound state, owing to GTPase activity of alpha-tubulin. This is Tubulin beta-1 chain (TUBB1) from Zea mays (Maize).